The chain runs to 377 residues: Chaperone protein DnaJ (377 aa).

In terms of domain architecture, J spans 4–69; the sequence is DYYEVLGVSK…EKRARYDQMG (66 aa). The CR-type zinc finger occupies 131 to 213; the sequence is GTEKEIQVPR…CSGKGTTRKV (83 aa). Zn(2+)-binding residues include Cys144, Cys147, Cys161, Cys164, Cys187, Cys190, Cys201, and Cys204. CXXCXGXG motif repeat units follow at residues 144-151, 161-168, 187-194, and 201-208; these read CTECHGSG, CSQCHGTG, CPACNGSG, and CKECSGKG.

It belongs to the DnaJ family. As to quaternary structure, homodimer. Zn(2+) serves as cofactor.

The protein resides in the cytoplasm. Functionally, participates actively in the response to hyperosmotic and heat shock by preventing the aggregation of stress-denatured proteins and by disaggregating proteins, also in an autonomous, DnaK-independent fashion. Unfolded proteins bind initially to DnaJ; upon interaction with the DnaJ-bound protein, DnaK hydrolyzes its bound ATP, resulting in the formation of a stable complex. GrpE releases ADP from DnaK; ATP binding to DnaK triggers the release of the substrate protein, thus completing the reaction cycle. Several rounds of ATP-dependent interactions between DnaJ, DnaK and GrpE are required for fully efficient folding. Also involved, together with DnaK and GrpE, in the DNA replication of plasmids through activation of initiation proteins. The chain is Chaperone protein DnaJ from Desulfitobacterium hafniense (strain DSM 10664 / DCB-2).